The primary structure comprises 703 residues: Subtilisin-like protease SBT4.7 (703 aa).

Residues 1–19 (MAKRDYFCFVVLFLSSVSA) form the signal peptide. Residues 20–107 (VIDDPQNKQV…VFPNINYKLQ (88 aa)) constitute a propeptide, activation peptide. The Inhibitor I9 domain maps to 29–106 (VYVVYMGSLP…SVFPNINYKL (78 aa)). The region spanning 111-556 (SWDFLGLKEG…AGHVDQIAAI (446 aa)) is the Peptidase S8 domain. The active-site Charge relay system is the Asp-139. Asn-170 carries an N-linked (GlcNAc...) asparagine glycan. The active-site Charge relay system is the His-194. N-linked (GlcNAc...) asparagine glycosylation is found at Asn-217, Asn-360, Asn-416, and Asn-433. Residues 350–411 (KYPLVYGDNF…LLPPDDFDSL (62 aa)) enclose the PA domain. Catalysis depends on Ser-495, which acts as the Charge relay system. N-linked (GlcNAc...) asparagine glycosylation is found at Asn-577, Asn-615, and Asn-633.

Belongs to the peptidase S8 family. The C-terminal propeptide is autocleaved.

The protein resides in the secreted. This Arabidopsis thaliana (Mouse-ear cress) protein is Subtilisin-like protease SBT4.7.